The sequence spans 194 residues: 7-methyl-GTP pyrophosphatase (194 aa).

D69 functions as the Proton acceptor in the catalytic mechanism.

The protein belongs to the Maf family. YceF subfamily. A divalent metal cation serves as cofactor.

It is found in the cytoplasm. The catalysed reaction is N(7)-methyl-GTP + H2O = N(7)-methyl-GMP + diphosphate + H(+). Nucleoside triphosphate pyrophosphatase that hydrolyzes 7-methyl-GTP (m(7)GTP). May have a dual role in cell division arrest and in preventing the incorporation of modified nucleotides into cellular nucleic acids. This chain is 7-methyl-GTP pyrophosphatase, found in Sodalis glossinidius (strain morsitans).